Consider the following 448-residue polypeptide: Trigger factor (448 aa).

The PPIase FKBP-type domain occupies 162–243 (DDFAIIDIEA…VQQTKERKLP (82 aa)). The segment at 426–448 (DEGKAVDPSEYFGEEEESAEESE) is disordered. A compositionally biased stretch (acidic residues) spans 437 to 448 (FGEEEESAEESE).

It belongs to the FKBP-type PPIase family. Tig subfamily.

It localises to the cytoplasm. It catalyses the reaction [protein]-peptidylproline (omega=180) = [protein]-peptidylproline (omega=0). Its function is as follows. Involved in protein export. Acts as a chaperone by maintaining the newly synthesized protein in an open conformation. Functions as a peptidyl-prolyl cis-trans isomerase. The chain is Trigger factor from Corynebacterium diphtheriae (strain ATCC 700971 / NCTC 13129 / Biotype gravis).